The primary structure comprises 431 residues: Enolase (431 aa).

Residues Leu-27–Glu-47 are disordered. Residue Gln-163 coordinates (2R)-2-phosphoglycerate. Catalysis depends on Glu-205, which acts as the Proton donor. Mg(2+) contacts are provided by Asp-242, Glu-285, and Asp-312. (2R)-2-phosphoglycerate contacts are provided by Lys-337, Arg-366, Ser-367, and Lys-388. Lys-337 acts as the Proton acceptor in catalysis.

Belongs to the enolase family. It depends on Mg(2+) as a cofactor.

The protein resides in the cytoplasm. It is found in the secreted. Its subcellular location is the cell surface. It catalyses the reaction (2R)-2-phosphoglycerate = phosphoenolpyruvate + H2O. It functions in the pathway carbohydrate degradation; glycolysis; pyruvate from D-glyceraldehyde 3-phosphate: step 4/5. Its function is as follows. Catalyzes the reversible conversion of 2-phosphoglycerate (2-PG) into phosphoenolpyruvate (PEP). It is essential for the degradation of carbohydrates via glycolysis. The polypeptide is Enolase (Oleidesulfovibrio alaskensis (strain ATCC BAA-1058 / DSM 17464 / G20) (Desulfovibrio alaskensis)).